Reading from the N-terminus, the 187-residue chain is MNYFDNKIDQFATYLQKRNNLDHIQFLQVRLGMQVLAKNIGKLIVMYTIAYILNIFIFTLITNISFYLIRRYAHGAHAPSSFWCYIESITLFIVLPLLVLHFHINETLMMFLALISVGVVIKYAPAATKKKPIPARLVKQKRYFSIIISTILFIITLFVKEPYTQFIQLGIIIQAITLLPIYYSKED.

A run of 5 helical transmembrane segments spans residues I49–I69, F82–F102, T107–A127, Y143–Y163, and T164–S184.

Belongs to the AgrB family.

The protein localises to the cell membrane. Essential for the production of a quorum sensing system signal molecule, the autoinducing peptide (AIP). This quorum sensing system is responsible for the regulation of the expression of virulence factor genes. Involved in the proteolytic processing of AgrD, the precursor of AIP. This is Accessory gene regulator protein B from Staphylococcus aureus (strain MW2).